The sequence spans 116 residues: Putative oxygen-evolving enhancer protein 1 (116 aa).

The protein belongs to the PsbO family.

Its subcellular location is the plastid. The protein resides in the chloroplast thylakoid membrane. Functionally, stabilizes the manganese cluster which is the primary site of water splitting. This Pinus strobus (Eastern white pine) protein is Putative oxygen-evolving enhancer protein 1.